Reading from the N-terminus, the 516-residue chain is UDP-N-acetylmuramyl-tripeptide synthetase (516 aa).

S38 contacts UDP-N-acetyl-alpha-D-muramoyl-L-alanyl-D-glutamate. 116 to 122 (GTKGKTT) provides a ligand contact to ATP. UDP-N-acetyl-alpha-D-muramoyl-L-alanyl-D-glutamate is bound by residues 162-163 (TT), S189, and R197. Residue K231 is modified to N6-carboxylysine.

This sequence belongs to the MurCDEF family. MurE subfamily. Post-translationally, carboxylation is probably crucial for Mg(2+) binding and, consequently, for the gamma-phosphate positioning of ATP.

The protein localises to the cytoplasm. It participates in cell wall biogenesis; peptidoglycan biosynthesis. In terms of biological role, catalyzes the addition of an amino acid to the nucleotide precursor UDP-N-acetylmuramoyl-L-alanyl-D-glutamate (UMAG) in the biosynthesis of bacterial cell-wall peptidoglycan. The polypeptide is UDP-N-acetylmuramyl-tripeptide synthetase (Lactobacillus delbrueckii subsp. bulgaricus (strain ATCC 11842 / DSM 20081 / BCRC 10696 / JCM 1002 / NBRC 13953 / NCIMB 11778 / NCTC 12712 / WDCM 00102 / Lb 14)).